The chain runs to 108 residues: Class I hydrophobin 3 (108 aa).

Residues 1–17 form the signal peptide; it reads MFSRVFAVASLAALALA. Cystine bridges form between Cys-26–Cys-87, Cys-33–Cys-81, Cys-34–Cys-67, and Cys-88–Cys-101.

This sequence belongs to the fungal hydrophobin family. As to quaternary structure, self-assembles to form functional amyloid fibrils called rodlets. Self-assembly into fibrillar rodlets occurs spontaneously at hydrophobic:hydrophilic interfaces and the rodlets further associate laterally to form amphipathic monolayers.

The protein localises to the secreted. The protein resides in the cell wall. Its function is as follows. Aerial growth, conidiation, and dispersal of filamentous fungi in the environment rely upon a capability of their secreting small amphipathic proteins called hydrophobins (HPBs) with low sequence identity. Class I can self-assemble into an outermost layer of rodlet bundles on aerial cell surfaces, conferring cellular hydrophobicity that supports fungal growth, development and dispersal; whereas Class II form highly ordered films at water-air interfaces through intermolecular interactions but contribute nothing to the rodlet structure. The protein is Class I hydrophobin 3 of Pisolithus tinctorius (Dead man's foot).